Here is a 1481-residue protein sequence, read N- to C-terminus: Cystic fibrosis transmembrane conductance regulator (1481 aa).

Residues 1–77 (MQRSPLEKAS…KLINALRRCF (77 aa)) are Cytoplasmic-facing. A helical membrane pass occupies residues 78 to 98 (FWRFMFYGILLYLGEVTKAVQ). Residues 81–365 (FMFYGILLYL…WAVQTWYDSL (285 aa)) form the ABC transmembrane type-1 1 domain. At 99 to 122 (PLLLGRIIASYDPDNKEERSIAIY) the chain is on the extracellular side. The chain crosses the membrane as a helical span at residues 123–146 (LGIGLCLLFIVRTLLLHPAIFGLH). Residues 147–195 (HIGMQMRIAMFSLIYKKTLKLSSRVLDKISIGQLVSLLSNNLNKFDEGL) are Cytoplasmic-facing. Residues 196–216 (ALAHFVWIVPLQVALLMGLIW) form a helical membrane-spanning segment. At 217–222 (ELLQAS) the chain is on the extracellular side. The helical transmembrane segment at 223-243 (AFCGLGFLIVLALFQAGLGRM) threads the bilayer. Topologically, residues 244 to 298 (MMKYRDQRAGKINERLVITSEMIENIQSVKAYCWEEAMEKMIENLRQTELKLTRK) are cytoplasmic. The helical transmembrane segment at 299 to 319 (AAYVRYFNSSAFFFSGFFVVF) threads the bilayer. Residues 320-339 (LSVLPYALIKGIVLRKIFTT) are Extracellular-facing. The helical transmembrane segment at 340–358 (ISFCIVLRMAVTRQFPWAV) threads the bilayer. Residues 359 to 858 (QTWYDSLGAI…YLRYITVHKS (500 aa)) are Cytoplasmic-facing. ATP-binding positions include Trp401, Ser434, 458–465 (GSTGAGKT), and Gln493. The ABC transporter 1 domain occupies 423-646 (NDDDSLFFSN…RPDFSSKLMG (224 aa)). A lipid anchor (S-palmitoyl cysteine) is attached at Cys524. Residues Ser549 and Ser660 each carry the phosphoserine modification. Positions 654–831 (SAERRNSILT…EEINEEDLKE (178 aa)) are disordered R region. Ser670 bears the Phosphoserine; by PKA mark. At Ser686 the chain carries Phosphoserine. Residue Lys688 forms a Glycyl lysine isopeptide (Lys-Gly) (interchain with G-Cter in ubiquitin) linkage. Phosphoserine is present on residues Ser700 and Ser712. Thr717 bears the Phosphothreonine mark. Phosphoserine occurs at positions 737, 753, 768, 790, 795, and 813. A helical transmembrane segment spans residues 859 to 879 (LIFVLIWCLVIFLAEVAASLV). An ABC transmembrane type-1 2 domain is found at 859–1155 (LIFVLIWCLV…AVNSSIDVDS (297 aa)). Residues 880-918 (VLWFLGNTPPQDKGNSTYSRNNSYAVIITRTSSYYVFYI) are Extracellular-facing. N-linked (GlcNAc...) asparagine glycosylation is found at Asn894 and Asn900. A discontinuously helical membrane pass occupies residues 919–939 (YVGVADTLLAMGFFRGLPLVH). At 940 to 990 (TLITVSKILHHKMLHSVLQAPMSTLNTLKAGGILNRFSKDIAILDDLLPLT) the chain is on the cytoplasmic side. The helical transmembrane segment at 991–1011 (IFDFIQLLLIVIGAIAVVAVL) threads the bilayer. The Extracellular segment spans residues 1012-1013 (QP). The helical transmembrane segment at 1014 to 1034 (YIFVATVPVIVAFIMLRAYFL) threads the bilayer. The Cytoplasmic portion of the chain corresponds to 1035 to 1095 (QTSQQLKQLE…TANWFLYLST (61 aa)). A helical transmembrane segment spans residues 1096-1116 (LRWFQMRIEMIFVIFFIAVTF). At 1117–1130 (ISILTTGEGEGTVG) the chain is on the extracellular side. The helical transmembrane segment at 1131-1151 (IILTLAMNIMSTLQWAVNSSI) threads the bilayer. Over 1152 to 1481 (DVDSLMRSVS…TEEEVQDTRL (330 aa)) the chain is Cytoplasmic. In terms of domain architecture, ABC transporter 2 spans 1211-1444 (MTVKDLTAKY…RSLFQQAISP (234 aa)). ATP-binding positions include Tyr1220 and 1245 to 1252 (GRTGSGKS). Residues 1387-1481 (RTLKQAFADC…TEEEVQDTRL (95 aa)) are interaction with GORASP2. A lipid anchor (S-palmitoyl cysteine) is attached at Cys1396. 2 positions are modified to phosphoserine: Ser1445 and Ser1457. The PDZ-binding signature appears at 1479–1481 (TRL).

This sequence belongs to the ABC transporter superfamily. ABCC family. CFTR transporter (TC 3.A.1.202) subfamily. Monomer; does not require oligomerization for channel activity. May form oligomers in the membrane. Interacts with SLC26A3, SLC26A6 and NHERF1. Interacts with SHANK2. Interacts with MYO6. Interacts (via C-terminus) with GOPC (via PDZ domain); this promotes CFTR internalization and thereby decreases channel activity. Interacts with SLC4A7 through NHERF1. Found in a complex with MYO5B and RAB11A. Interacts with ANO1. Interacts with SLC26A8. Interacts with AHCYL1; the interaction increases CFTR activity. Interacts with CSE1L. The core-glycosylated form interacts with GORASP2 (via PDZ GRASP-type 1 domain) in respone to ER stress. Interacts with MARCHF2; the interaction leads to CFTR ubiqtuitination and degradation. Interacts with ADGRG2. In terms of processing, N-glycosylated. Post-translationally, phosphorylated; cAMP treatment promotes phosphorylation and activates the channel. Dephosphorylation decreases the ATPase activity (in vitro). Phosphorylation at PKA sites activates the channel. Phosphorylation at PKC sites enhances the response to phosphorylation by PKA. Phosphorylated by AMPK; this inhibits channel activity. Ubiquitinated, leading to its degradation in the lysosome. Deubiquitination by USP10 in early endosomes enhances its endocytic recycling to the cell membrane. Ubiquitinated by RNF185 during ER stress. Ubiquitinated by MARCHF2.

It is found in the apical cell membrane. It localises to the early endosome membrane. The protein resides in the cell membrane. Its subcellular location is the recycling endosome membrane. The protein localises to the endoplasmic reticulum membrane. It is found in the nucleus. It carries out the reaction ATP + H2O + closed Cl(-) channel = ADP + phosphate + open Cl(-) channel.. The catalysed reaction is chloride(in) = chloride(out). The enzyme catalyses hydrogencarbonate(in) = hydrogencarbonate(out). It catalyses the reaction ATP + H2O = ADP + phosphate + H(+). In terms of biological role, epithelial ion channel that plays an important role in the regulation of epithelial ion and water transport and fluid homeostasis. Mediates the transport of chloride ions across the cell membrane. Possesses an intrinsic ATPase activity and utilizes ATP to gate its channel; the passive flow of anions through the channel is gated by cycles of ATP binding and hydrolysis by the ATP-binding domains. The ion channel is also permeable to HCO(3)(-); selectivity depends on the extracellular chloride concentration. Exerts its function also by modulating the activity of other ion channels and transporters. Contributes to the regulation of the pH and the ion content of the epithelial fluid layer. Modulates the activity of the epithelial sodium channel (ENaC) complex, in part by regulating the cell surface expression of the ENaC complex. May regulate bicarbonate secretion and salvage in epithelial cells by regulating the transporter SLC4A7. Can inhibit the chloride channel activity of ANO1. Plays a role in the chloride and bicarbonate homeostasis during sperm epididymal maturation and capacitation. The sequence is that of Cystic fibrosis transmembrane conductance regulator from Macaca nemestrina (Pig-tailed macaque).